The primary structure comprises 415 residues: Nacrein-like protein C2 (415 aa).

Asn27 is a glycosylation site (N-linked (GlcNAc...) asparagine). The Alpha-carbonic anhydrase domain maps to 33–414; the sequence is AGFSYDRSIC…KNKVTVYKSF (382 aa). Zn(2+) contacts are provided by His132, His134, and His157. The interval 201-297 is disordered; it reads DEPDDEECKH…GENGHKHGCR (97 aa). A compositionally biased stretch (basic and acidic residues) spans 207–219; it reads ECKHILKGHHPDN. Over residues 220–289 the composition is skewed to low complexity; it reads NENGNGDNGN…NNGENGNNGE (70 aa). Tandem repeats lie at residues 225–227, 228–230, 231–233, 234–236, 237–239, 240–242, 243–245, 246–248, 249–251, 252–254, 255–257, 258–260, 261–263, 264–266, 267–269, 270–272, 273–275, 276–278, 279–281, 282–284, 285–286, and 288–290. The tract at residues 225–290 is 27 X 3 AA approximate tandem repeats of G-X-N; it reads GDNGNNGYNG…NGENGNNGEN (66 aa). 355–356 lines the substrate pocket; sequence TT.

It belongs to the alpha-carbonic anhydrase family. As to quaternary structure, homooligomer; disulfide-linked. May also be disulfide-linked to insoluble organic matrix. The cofactor is Zn(2+). In terms of tissue distribution, expressed in the mantle.

It is found in the secreted. It localises to the extracellular space. The protein localises to the extracellular matrix. The enzyme catalyses hydrogencarbonate + H(+) = CO2 + H2O. In terms of biological role, acts as a negative regulator for calcification in the shells of mollusks. May function both as a calcium concentrator and as a carbonic anhydrase required for production of carbonate ions, which are assembled to CaCO(3) at mineralization sites. Is important for shell formation in both the calcitic prismatic layer and the aragonitic nacreous layer. Shows inhibitory activity of crystal formation when present in free state but, when attached to the insoluble matrix, may regulate the form and size of aragonite crystal. This is Nacrein-like protein C2 from Crassostrea nippona (Iwagaki oyster).